The following is a 256-amino-acid chain: Fructose-1,6-bisphosphatase/inositol-1-monophosphatase (256 aa).

E65, D79, I81, and D82 together coordinate Mg(2+). Substrate contacts are provided by residues 82–84 (DGT), R172, A177, and R196. D201 provides a ligand contact to Mg(2+).

It belongs to the inositol monophosphatase superfamily. FBPase class 4 family. As to quaternary structure, homotetramer. The cofactor is Mg(2+).

The catalysed reaction is beta-D-fructose 1,6-bisphosphate + H2O = beta-D-fructose 6-phosphate + phosphate. It catalyses the reaction a myo-inositol phosphate + H2O = myo-inositol + phosphate. In contrast to mammalian I-1-P phosphatases, is only weakly inhibited by Li(+), since 50% inhibitory concentration for Li(+) is about 100 mM, and the Li(+) concentration required to totally abolish I-1-Pase activity is 1 M. Its function is as follows. Phosphatase with broad specificity; it can dephosphorylate fructose 1,6-bisphosphate, both D and L isomers of inositol-1-phosphate (I-1-P) but displaying a 20-fold higher rate of hydrolysis of D-I-1-P than of the L isomer, 2'-AMP, pNPP, inositol-2-phosphate, beta-glycerol phosphate, and alpha-D-glucose-1-phosphate. Cannot hydrolyze glucose-6-phosphate, fructose-6-phosphate, 5'-AMP and NAD(+). May be involved in the biosynthesis of a unique osmolyte, di-myo-inositol 1,1-phosphate. The sequence is that of Fructose-1,6-bisphosphatase/inositol-1-monophosphatase (suhB) from Thermotoga maritima (strain ATCC 43589 / DSM 3109 / JCM 10099 / NBRC 100826 / MSB8).